We begin with the raw amino-acid sequence, 49 residues long: MSNETFEQNEPKPTKVEELQPGDVEAVEDSTPVREITQTDHINKAMLQI.

Positions 1-49 (MSNETFEQNEPKPTKVEELQPGDVEAVEDSTPVREITQTDHINKAMLQI) are disordered. Residues 9-18 (NEPKPTKVEE) are compositionally biased toward basic and acidic residues.

This is an uncharacterized protein from Dictyostelium discoideum (Social amoeba).